Consider the following 277-residue polypeptide: Urease accessory protein UreD (277 aa).

Positions 1–20 are disordered; that stretch reads MRQTAQEDASPAPMQRAHGT.

This sequence belongs to the UreD family. As to quaternary structure, ureD, UreF and UreG form a complex that acts as a GTP-hydrolysis-dependent molecular chaperone, activating the urease apoprotein by helping to assemble the nickel containing metallocenter of UreC. The UreE protein probably delivers the nickel.

The protein localises to the cytoplasm. Functionally, required for maturation of urease via the functional incorporation of the urease nickel metallocenter. In Chelativorans sp. (strain BNC1), this protein is Urease accessory protein UreD.